The following is a 108-amino-acid chain: MKVLVITALCFILLQNVLGEDTYEDLQNYIENLINENQDEARECVPLENDCTKLKYSNPCCKDEKKKYQYKCSCIVDKTEQCTCQRKETVEKMMKGMKYIKNLGKKIG.

An N-terminal signal peptide occupies residues 1–19 (MKVLVITALCFILLQNVLG). Positions 20-42 (EDTYEDLQNYIENLINENQDEAR) are cleaved as a propeptide — removed in mature form. The Processing quadruplet motif signature appears at 39–42 (DEAR). Disulfide bonds link Cys-44–Cys-61, Cys-51–Cys-72, Cys-60–Cys-84, and Cys-74–Cys-82. Residue Ile-107 is modified to Isoleucine amide.

The protein belongs to the neurotoxin 19 (CSTX) family. 11 (latartoxin) subfamily. In terms of processing, contains 4 disulfide bonds. Cleavage of the propeptide depends on the processing quadruplet motif (XXXR, with at least one of X being E). In terms of tissue distribution, expressed by the venom gland.

The protein localises to the secreted. Its function is as follows. Insect toxin. The sequence is that of Latartoxin-2c from Lachesana tarabaevi (Spider).